A 316-amino-acid chain; its full sequence is GTP cyclohydrolase FolE2 1 (316 aa).

It belongs to the GTP cyclohydrolase IV family.

The enzyme catalyses GTP + H2O = 7,8-dihydroneopterin 3'-triphosphate + formate + H(+). It participates in cofactor biosynthesis; 7,8-dihydroneopterin triphosphate biosynthesis; 7,8-dihydroneopterin triphosphate from GTP: step 1/1. Converts GTP to 7,8-dihydroneopterin triphosphate. The protein is GTP cyclohydrolase FolE2 1 of Burkholderia orbicola (strain AU 1054).